The chain runs to 59 residues: U-actitoxin-Aer2b (59 aa).

In terms of processing, contains 5 disulfide bonds.

It is found in the secreted. The protein localises to the nematocyst. The polypeptide is U-actitoxin-Aer2b (Anemonia erythraea (Sea anemone)).